A 503-amino-acid chain; its full sequence is Aromatase 1 (503 aa).

Residue Cys437 coordinates heme.

Belongs to the cytochrome P450 family. Heme serves as cofactor.

It is found in the membrane. It catalyses the reaction testosterone + 3 reduced [NADPH--hemoprotein reductase] + 3 O2 = 17beta-estradiol + formate + 3 oxidized [NADPH--hemoprotein reductase] + 4 H2O + 4 H(+). The catalysed reaction is androst-4-ene-3,17-dione + 3 reduced [NADPH--hemoprotein reductase] + 3 O2 = estrone + formate + 3 oxidized [NADPH--hemoprotein reductase] + 4 H2O + 4 H(+). Its function is as follows. Catalyzes the formation of aromatic C18 estrogens from C19 androgens. The chain is Aromatase 1 (CYP19A1) from Sus scrofa (Pig).